Consider the following 317-residue polypeptide: NF-kappa-B inhibitor alpha (317 aa).

The interval 1–39 (MFQAAERPQEWAMEGPRDGLKKERLLDDRHDSGLDSMKD) is disordered. A compositionally biased stretch (basic and acidic residues) spans 15–39 (GPRDGLKKERLLDDRHDSGLDSMKD). A Glycyl lysine isopeptide (Lys-Gly) (interchain with G-Cter in SUMO); alternate cross-link involves residue Lys21. A Glycyl lysine isopeptide (Lys-Gly) (interchain with G-Cter in ubiquitin); alternate cross-link involves residue Lys21. Lys22 participates in a covalent cross-link: Glycyl lysine isopeptide (Lys-Gly) (interchain with G-Cter in ubiquitin). The Destruction motif signature appears at 30 to 36 (HDSGLDS). Ser32 carries the phosphoserine; by IKKA and IKKE modification. Ser36 is subject to Phosphoserine; by IKKA, IKKB, IKKE and TBK1. Tyr42 bears the Phosphotyrosine; by Tyr-kinases mark. The Nuclear export signal motif lies at 45–54 (MVKELQEIRL). 5 ANK repeats span residues 73 to 103 (DGDS…DLAF), 110 to 139 (LQQT…DPEL), 143 to 172 (RGNT…TPHL), 182 to 211 (NGHT…DVNA), and 216 to 245 (NGRT…DVNR). The Nuclear import signal motif lies at 110-120 (LQQTPLHLAVI). Residues Asn210 and Asn244 each carry the (3S)-3-hydroxyasparagine; by HIF1AN; partial modification. 2 positions are modified to phosphoserine; by CK2: Ser283 and Ser288. Thr291 bears the Phosphothreonine; by CK2 mark. The residue at position 293 (Ser293) is a Phosphoserine; by CK2. Thr299 carries the phosphothreonine; by CK2 modification.

It belongs to the NF-kappa-B inhibitor family. Interacts with RELA; the interaction requires the nuclear import signal. Part of a 70-90 kDa complex at least consisting of CHUK, IKBKB, NFKBIA, RELA, ELP1 and MAP3K14. Interacts with NKIRAS1 and NKIRAS2. Interacts with isoform 1 and isoform 2 of RWDD3; the interaction enhances sumoylation. Interacts with PRMT2. Interacts with PRKACA in platelets; this interaction is disrupted by thrombin and collagen. Interacts with MEFV. Interacts with DDRGK1; positively regulates NFKBIA phosphorylation and degradation. Interacts with HNRNPA2B1; the interaction may be mediated by the RRM2 domain of HNRNPA2B1, and HNRNPA2B1 may interact simultaneously with FAM76B and either NFKBIA or NFKBIE to form a complex. In terms of assembly, (Microbial infection) Interacts with HBV protein X. Post-translationally, phosphorylated at Ser-32 and Ser-36 by IKKA/CHUK and IKKB/IKBKB; disables inhibition of NF-kappa-B DNA-binding activity. Phosphorylation at positions 32 and 36 is prerequisite to recognition by the SCF(FBXW11) and SCF(BTRC) complexes, leading to polyubiquitination and subsequent degradation. Phosphorylated at Ser-32 in response to FK506 treatment: phosphorylation is independent of IKKA/CHUK and IKKB/IKBKB and promotes NFKBIA degradation, followed by NF-kappa-B activation. Phosphorylated at Tyr-42: its effect is however unclear. According to a report, phosphorylation at Tyr-42 activates NF-kappa-B without triggering proteolytic degradation of NFKBIA. According to another publication, phosphorylation at Tyr-42 inhibits NF-kappa-B activity by preventing phosphorylation at Ser-32 and Ser-36 and subsequent ubiquitination and degradation. Polyubiquitinated at Lys-21 and/or Lys-22 following phosphorylation at Ser-32 and Ser-36. Monoubiquitinated at Lys-21 and/or Lys-22 by UBE2D3. Ubiquitin chain elongation is then performed by CDC34 in cooperation with the SCF(FBXW11) E3 ligase complex, building ubiquitin chains from the UBE2D3-primed NFKBIA-linked ubiquitin. The resulting polyubiquitination leads to protein degradation. Also ubiquitinated by the SCF(BTRC) complex following stimulus-dependent phosphorylation at Ser-32 and Ser-36. Deubiquitinated by USP38, leading to NF-kappa-B inhibition. In terms of processing, sumoylated; sumoylation requires the presence of the nuclear import signal. Sumoylation blocks ubiquitination and proteasome-mediated degradation of the protein thereby increasing the protein stability. Post-translationally, hydroxylated by HIF1AN. (Microbial infection) Deubiquitinated by porcine reproductive and respiratory syndrome virus Nsp2 protein, which thereby interferes with NFKBIA degradation and impairs subsequent NF-kappa-B activation.

It is found in the cytoplasm. Its subcellular location is the nucleus. Its function is as follows. Inhibits the activity of dimeric NF-kappa-B/REL complexes by trapping REL (RELA/p65 and NFKB1/p50) dimers in the cytoplasm by masking their nuclear localization signals. On cellular stimulation by immune and pro-inflammatory responses, becomes phosphorylated promoting ubiquitination and degradation, enabling the dimeric RELA to translocate to the nucleus and activate transcription. This chain is NF-kappa-B inhibitor alpha (NFKBIA), found in Homo sapiens (Human).